Here is a 565-residue protein sequence, read N- to C-terminus: uncharacterized protein (565 aa).

A signal peptide spans 1–19; that stretch reads MRWLATFVALLIAISSVSA. Positions 494-504 are enriched in polar residues; sequence TGAENVTNNSV. The interval 494–525 is disordered; sequence TGAENVTNNSVTATTPPAKASQQTPAPATPPV. A compositionally biased stretch (low complexity) spans 505–519; sequence TATTPPAKASQQTPA.

This is an uncharacterized protein from Archaeoglobus fulgidus (strain ATCC 49558 / DSM 4304 / JCM 9628 / NBRC 100126 / VC-16).